Reading from the N-terminus, the 400-residue chain is Keratin, type I cytoskeletal 19 (400 aa).

Residues 1-79 (MTSYSYRQSS…TASDGLLAGN (79 aa)) form a head region. Arg-7 is subject to Omega-N-methylarginine. Phosphoserine occurs at positions 14 and 22. Arg-24 is subject to Asymmetric dimethylarginine; alternate. Arg-24 bears the Omega-N-methylarginine; alternate mark. Position 32 is an omega-N-methylarginine (Arg-32). 2 positions are modified to phosphoserine: Ser-35 and Ser-40. 2 positions are modified to omega-N-methylarginine: Arg-43 and Arg-51. 2 positions are modified to phosphoserine: Ser-57 and Ser-72. The interval 80–115 (EKLTMQNLNDRLASYLDKVRALEAANGELEVKIRDW) is coil 1A. The region spanning 80-391 (EKLTMQNLND…SLLEGQEDHY (312 aa)) is the IF rod domain. Positions 116 to 133 (YQKQGPGPSRDYSHYYTT) are linker 1. The segment at 134–225 (IQDLRDKILG…KNHEEEISTL (92 aa)) is coil 1B. A linker 12 region spans residues 226–248 (RGQVGGQVSVEVDSAPGTDLAKI). Residues 244-390 (DLAKILSDMR…RSLLEGQEDH (147 aa)) form a necessary for interaction with PNN region. The tract at residues 249-387 (LSDMRSQYEV…ATYRSLLEGQ (139 aa)) is coil 2. At Thr-323 the chain carries Phosphothreonine. The tract at residues 388 to 400 (EDHYSNLSASKVL) is rod-like helical tail. A Phosphotyrosine modification is found at Tyr-391. Position 395 is a phosphoserine (Ser-395).

It belongs to the intermediate filament family. As to quaternary structure, heterotetramer of two type I and two type II keratins. Interacts with PNN and the actin-binding domain of DMD.

Functionally, involved in the organization of myofibers. Together with KRT8, helps to link the contractile apparatus to dystrophin at the costameres of striated muscle. The protein is Keratin, type I cytoskeletal 19 of Pongo abelii (Sumatran orangutan).